We begin with the raw amino-acid sequence, 426 residues long: Monocarboxylate transporter 13 (426 aa).

At 1–10 the chain is on the cytoplasmic side; the sequence is MAYRAEPPDG. 12 helical membrane passes run 11–31, 52–72, 83–103, 106–126, 139–159, 172–192, 221–241, 244–264, 283–303, 306–326, 338–358, and 374–394; these read GWGWMVVLSAFFQSALVFGVL, VSWIASIGIAVQQFGSPVGSA, VMTGGILTALGMLLASFATSL, LYLSIGLLSGSGWALTFTPTL, LAMGLALTGVGLSSFAFAPLF, LLLVSALSLHLVACGALLRPL, VALTLINTGYFIPYVHLVAHL, LGWDPLPAAFLLSVAAISDLV, LLMLWTTLTGVILALYPVAEA, GLVALTMAYGFTSGALTPVAF, IYCGLGLVQMVESIGGLLGAP, and FVVAGAFLLAGSGVLITLPHF. Over 395–426 the chain is Cytoplasmic; it reads FCFSAPTSKPQDLVTEALDTKVPLPEEGLGED.

It belongs to the major facilitator superfamily. Monocarboxylate porter (TC 2.A.1.13) family.

Its subcellular location is the golgi apparatus membrane. The protein localises to the cell membrane. In terms of biological role, proton-linked monocarboxylate transporter. May catalyze the transport of monocarboxylates across the plasma membrane. In Bos taurus (Bovine), this protein is Monocarboxylate transporter 13 (SLC16A13).